The following is a 144-amino-acid chain: NADPH-dependent 7-cyano-7-deazaguanine reductase (144 aa).

Over residues 1–21 (MSQSPIQNPTSDPNAQSVQET) the composition is skewed to polar residues. Positions 1 to 27 (MSQSPIQNPTSDPNAQSVQETSESKYG) are disordered. The active-site Thioimide intermediate is Cys61. Residue Asp68 is the Proton donor of the active site. Residues 83–85 (VEL) and 102–103 (HE) contribute to the substrate site.

It belongs to the GTP cyclohydrolase I family. QueF type 1 subfamily.

It is found in the cytoplasm. The enzyme catalyses 7-aminomethyl-7-carbaguanine + 2 NADP(+) = 7-cyano-7-deazaguanine + 2 NADPH + 3 H(+). It participates in tRNA modification; tRNA-queuosine biosynthesis. Its function is as follows. Catalyzes the NADPH-dependent reduction of 7-cyano-7-deazaguanine (preQ0) to 7-aminomethyl-7-deazaguanine (preQ1). The chain is NADPH-dependent 7-cyano-7-deazaguanine reductase from Acaryochloris marina (strain MBIC 11017).